Reading from the N-terminus, the 566-residue chain is MKQSKVFIPTMKEVPAGAEALSHRLLLKAGLIKQSTSGIYSYLPLAARVLNNIEAIVREEMERIDAVEILMPALQQAELWEESGRWSAYGPELMRLQDRNGREFALGPTHEEVVTSIVRDELKSYKQLPLTLFQIQSKYRDEKRPRFGLLRGREFIMKDAYSFHADEDSLDASYQDMYNAYGRIFKRVGINARPVVADSGAIGGSHTHEFMALSEIGEDTIVYSEQSDYAANIEKAEVVYQANEKHEDLQPLTKIETPNIHTAQELATFLDKPLDEITKSMVFKIDGEFIMVLVRGHHELNDIKLKAYFGTDNIELASEDEIVNLLGAKPGSLGPVFDKEIKVYADNFIQDLNNIVVGANEDGYHLLNANIGRDFEVDAFGDFRFILEGEPLSDGSGPARFAEGIEVGQVFKLGTKYSESMNATFLDNQGKAQPLLMGCYGIGVSRTLSAIVEQNNDENGIIWPKSVTPFDLHLITINPKKDDQRELADQLYTQLKENYDVLYDDRKERAGVKFNDADLIGLPVRVVVGKNAAEGIVEVKRRDTGESEDVHVDNLINYVNTLYSNI.

Belongs to the class-II aminoacyl-tRNA synthetase family. ProS type 1 subfamily. As to quaternary structure, homodimer.

It is found in the cytoplasm. The enzyme catalyses tRNA(Pro) + L-proline + ATP = L-prolyl-tRNA(Pro) + AMP + diphosphate. Its function is as follows. Catalyzes the attachment of proline to tRNA(Pro) in a two-step reaction: proline is first activated by ATP to form Pro-AMP and then transferred to the acceptor end of tRNA(Pro). As ProRS can inadvertently accommodate and process non-cognate amino acids such as alanine and cysteine, to avoid such errors it has two additional distinct editing activities against alanine. One activity is designated as 'pretransfer' editing and involves the tRNA(Pro)-independent hydrolysis of activated Ala-AMP. The other activity is designated 'posttransfer' editing and involves deacylation of mischarged Ala-tRNA(Pro). The misacylated Cys-tRNA(Pro) is not edited by ProRS. This is Proline--tRNA ligase from Staphylococcus saprophyticus subsp. saprophyticus (strain ATCC 15305 / DSM 20229 / NCIMB 8711 / NCTC 7292 / S-41).